The sequence spans 71 residues: Small ribosomal subunit protein bS21 (71 aa).

It belongs to the bacterial ribosomal protein bS21 family.

In Baumannia cicadellinicola subsp. Homalodisca coagulata, this protein is Small ribosomal subunit protein bS21.